Consider the following 124-residue polypeptide: UPF0102 protein Msil_0293 (124 aa).

It belongs to the UPF0102 family.

The chain is UPF0102 protein Msil_0293 from Methylocella silvestris (strain DSM 15510 / CIP 108128 / LMG 27833 / NCIMB 13906 / BL2).